Reading from the N-terminus, the 259-residue chain is MASPQGGQIAIAMRLRNQLQSVYKMDPLRNEEEVRVKIKDLNEHIVCCLCAGYFVDATTITECLHTFCKSCIVKYLQTSKYCPMCNIKIHETQPLLNLKLDRVMQDIVYKLVPGLQDSEEKRIREFYQSRGLDRVTQPTGEEPALSNLGLPFSSFDHSKAHYYRYDEQLNLCLERLSSGKDKNKSVLQNKYVRCSVRAEVRHLRRVLCHRLMLNPQHVQLLFDNEVLPDHMTMKQIWLSRWFGKPSPLLLQYSVKEKRR.

The residue at position 2 (A2) is an N-acetylalanine. The residue at position 3 (S3) is a Phosphoserine. K24 participates in a covalent cross-link: Glycyl lysine isopeptide (Lys-Gly) (interchain with G-Cter in SUMO2). Residues 47 to 86 form an RING-type zinc finger; the sequence is CCLCAGYFVDATTITECLHTFCKSCIVKYLQTSKYCPMCN. The interval 86 to 247 is required for repressor activity; it reads NIKIHETQPL…LSRWFGKPSP (162 aa). Residue K88 forms a Glycyl lysine isopeptide (Lys-Gly) (interchain with G-Cter in SUMO2) linkage. A required for the interaction with the KDM2B-SKP1 heterodimeric complex region spans residues 150–255; it reads LPFSSFDHSK…SPLLLQYSVK (106 aa). The tract at residues 167–255 is RING-finger and WD40-associated ubiquitin-like domain (RAWUL); sufficient for interaction with BCOR and BCORL1; sequence EQLNLCLERL…SPLLLQYSVK (89 aa).

As to quaternary structure, interacts with BCORL1, forming heterodimers. The PCGF1-BCORL1 heterodimeric complex interacts with the KDM2B-SKP1 heterodimeric complex to form a homotetrameric polycomb repression complex 1 (PRC1.1). Component of the repressive BCOR complex containing a Polycomb group subcomplex at least composed of RYBP, RING1 and RNF2/RING2. Specifically interacts with BCOR, RING1 and RNF2/RING2. Component of a PRC1-like complex. Interacts with CBX6, CBX7 and CBX8. Interacts with DPPA4, NANOG, POU5F1 and RYBP. As to expression, ubiquitous.

It is found in the nucleus. Its function is as follows. Component of the Polycomb group (PcG) multiprotein BCOR complex, a complex required to maintain the transcriptionally repressive state of some genes, such as BCL6 and the cyclin-dependent kinase inhibitor, CDKN1A. Transcriptional repressor that may be targeted to the DNA by BCL6; this transcription repressor activity may be related to PKC signaling pathway. Represses CDKN1A expression by binding to its promoter, and this repression is dependent on the retinoic acid response element (RARE element). Promotes cell cycle progression and enhances cell proliferation as well. May have a positive role in tumor cell growth by down-regulating CDKN1A. Component of a Polycomb group (PcG) multiprotein PRC1-like complex, a complex class required to maintain the transcriptionally repressive state of many genes, including Hox genes, throughout development. PcG PRC1 complex acts via chromatin remodeling and modification of histones; it mediates monoubiquitination of histone H2A 'Lys-119', rendering chromatin heritably changed in its expressibility. Within the PRC1-like complex, regulates RNF2 ubiquitin ligase activity. Regulates the expression of DPPA4 and NANOG in the NT2 embryonic carcinoma cells. The polypeptide is Polycomb group RING finger protein 1 (PCGF1) (Homo sapiens (Human)).